We begin with the raw amino-acid sequence, 273 residues long: Urease accessory protein UreD (273 aa).

This sequence belongs to the UreD family. As to quaternary structure, ureD, UreF and UreG form a complex that acts as a GTP-hydrolysis-dependent molecular chaperone, activating the urease apoprotein by helping to assemble the nickel containing metallocenter of UreC. The UreE protein probably delivers the nickel.

The protein localises to the cytoplasm. Functionally, required for maturation of urease via the functional incorporation of the urease nickel metallocenter. The sequence is that of Urease accessory protein UreD from Bacillus cereus (strain ATCC 10987 / NRS 248).